A 257-amino-acid polypeptide reads, in one-letter code: MTTTRHSSTDSVNIPGWGWQPFLEDAVQALQPLNLEPYPVANDFLYKQDQTGSKAKPITVTTATWACKTDKFRQVRAACVYGGTAASVLNFVINPSARFDLPFFGGDLVTLPSGHLLALDLQPADKSDEAHTQQVWEKLIPIFERWRSKLPDGGPIPEEAQPFFSPGFLWTRLPLGDEGDQLINSVVRPAFNDYLSLYLELAEAAKPVGDDRRDHLLKGQRRYTDYRAEKDPARGMLTRFHGSDWTEKYIHTVLFDL.

It belongs to the HY2 family.

It catalyses the reaction (3Z)-phycoerythrobilin + oxidized 2[4Fe-4S]-[ferredoxin] = 15,16-dihydrobiliverdin + reduced 2[4Fe-4S]-[ferredoxin] + 2 H(+). Catalyzes the two-electron reduction of the C2 and C3(1) diene system of 15,16-dihydrobiliverdin. The polypeptide is Phycoerythrobilin:ferredoxin oxidoreductase (Synechococcus sp. (strain CC9902)).